We begin with the raw amino-acid sequence, 383 residues long: Chaperone protein DnaJ (383 aa).

A J domain is found at 5–70; that stretch reads DYYELLGVSR…QKRAAYDRFG (66 aa). The segment at 140 to 219 adopts a CR-type zinc-finger fold; it reads GTKTEIRVPT…CSGAGTVPRE (80 aa). Zn(2+)-binding residues include Cys153, Cys156, Cys171, Cys174, Cys193, Cys196, Cys207, and Cys210. CXXCXGXG motif repeat units follow at residues 153-160, 171-178, 193-200, and 207-214; these read CDACSGTG, CPTCGGAG, and CRVCSGAG.

The protein belongs to the DnaJ family. In terms of assembly, homodimer. It depends on Zn(2+) as a cofactor.

It is found in the cytoplasm. Functionally, participates actively in the response to hyperosmotic and heat shock by preventing the aggregation of stress-denatured proteins and by disaggregating proteins, also in an autonomous, DnaK-independent fashion. Unfolded proteins bind initially to DnaJ; upon interaction with the DnaJ-bound protein, DnaK hydrolyzes its bound ATP, resulting in the formation of a stable complex. GrpE releases ADP from DnaK; ATP binding to DnaK triggers the release of the substrate protein, thus completing the reaction cycle. Several rounds of ATP-dependent interactions between DnaJ, DnaK and GrpE are required for fully efficient folding. Also involved, together with DnaK and GrpE, in the DNA replication of plasmids through activation of initiation proteins. This is Chaperone protein DnaJ from Acidiphilium cryptum (strain JF-5).